We begin with the raw amino-acid sequence, 97 residues long: Large ribosomal subunit protein uL23 (97 aa).

This sequence belongs to the universal ribosomal protein uL23 family. As to quaternary structure, part of the 50S ribosomal subunit. Contacts protein L29, and trigger factor when it is bound to the ribosome.

In terms of biological role, one of the early assembly proteins it binds 23S rRNA. One of the proteins that surrounds the polypeptide exit tunnel on the outside of the ribosome. Forms the main docking site for trigger factor binding to the ribosome. This Bartonella henselae (strain ATCC 49882 / DSM 28221 / CCUG 30454 / Houston 1) (Rochalimaea henselae) protein is Large ribosomal subunit protein uL23.